We begin with the raw amino-acid sequence, 347 residues long: 4-hydroxy-2-oxovalerate aldolase 1 (347 aa).

The Pyruvate carboxyltransferase domain occupies isoleucine 13–alanine 265. Arginine 21–aspartate 22 serves as a coordination point for substrate. Aspartate 22 contacts Mn(2+). Histidine 25 acts as the Proton acceptor in catalysis. Substrate is bound by residues serine 175 and histidine 204. Residues histidine 204 and histidine 206 each coordinate Mn(2+). Tyrosine 295 is a binding site for substrate.

Belongs to the 4-hydroxy-2-oxovalerate aldolase family.

It catalyses the reaction (S)-4-hydroxy-2-oxopentanoate = acetaldehyde + pyruvate. The polypeptide is 4-hydroxy-2-oxovalerate aldolase 1 (Rhodococcus erythropolis (strain PR4 / NBRC 100887)).